The primary structure comprises 585 residues: Membrane protein insertase YidC (585 aa).

Helical transmembrane passes span 5-25 (SVTG…FMSP), 338-358 (FGWD…AFTW), 362-382 (FVSN…LVTY), 432-452 (LGGC…FYVF), 482-502 (IPMY…TVFL), and 518-538 (IMLY…PSGL).

This sequence belongs to the OXA1/ALB3/YidC family. Type 1 subfamily. Interacts with the Sec translocase complex via SecD. Specifically interacts with transmembrane segments of nascent integral membrane proteins during membrane integration.

The protein resides in the cell inner membrane. In terms of biological role, required for the insertion and/or proper folding and/or complex formation of integral membrane proteins into the membrane. Involved in integration of membrane proteins that insert both dependently and independently of the Sec translocase complex, as well as at least some lipoproteins. Aids folding of multispanning membrane proteins. The protein is Membrane protein insertase YidC of Chlorobium luteolum (strain DSM 273 / BCRC 81028 / 2530) (Pelodictyon luteolum).